The following is a 145-amino-acid chain: D-aminoacyl-tRNA deacylase (145 aa).

The Gly-cisPro motif, important for rejection of L-amino acids motif lies at 137-138 (GP).

It belongs to the DTD family. As to quaternary structure, homodimer.

It is found in the cytoplasm. It catalyses the reaction glycyl-tRNA(Ala) + H2O = tRNA(Ala) + glycine + H(+). It carries out the reaction a D-aminoacyl-tRNA + H2O = a tRNA + a D-alpha-amino acid + H(+). An aminoacyl-tRNA editing enzyme that deacylates mischarged D-aminoacyl-tRNAs. Also deacylates mischarged glycyl-tRNA(Ala), protecting cells against glycine mischarging by AlaRS. Acts via tRNA-based rather than protein-based catalysis; rejects L-amino acids rather than detecting D-amino acids in the active site. By recycling D-aminoacyl-tRNA to D-amino acids and free tRNA molecules, this enzyme counteracts the toxicity associated with the formation of D-aminoacyl-tRNA entities in vivo and helps enforce protein L-homochirality. The polypeptide is D-aminoacyl-tRNA deacylase (Pelobacter propionicus (strain DSM 2379 / NBRC 103807 / OttBd1)).